A 741-amino-acid chain; its full sequence is Protein ACCUMULATION AND REPLICATION OF CHLOROPLASTS 3, chloroplastic (741 aa).

The transit peptide at 1–41 (MPISMELPVFSTLRVPLFSRLALLPTFGVPFSSLGATTRLN) directs the protein to the chloroplast. Disordered stretches follow at residues 444–465 (ENGDDSEYPLKEGEPSRNSRLD) and 539–558 (DSREESFFNPNGSTKDSSDT). The segment covering 451–465 (YPLKEGEPSRNSRLD) has biased composition (basic and acidic residues). Over residues 546-558 (FNPNGSTKDSSDT) the composition is skewed to polar residues. 3 MORN repeats span residues 612 to 628 (QGGLPEGKGRLVLGDGS), 630 to 652 (YDGMWHNGKRSGLGTFYFKNGDV), and 653 to 675 (FQGTWREDLIHGKGWFYFHKGDR).

As to quaternary structure, self-interacts. Interacts with FTSZ, CDP1/PARC6 (via N-terminus), MIND1 and MINE1. Part of a complex made of ARC3, ARC6, FTSZ1 and FTSZ2. Recruited to the middle of the plastid by CDP1/PARC6 where subsequent complex made of CDP1/PARC6, ARC3 and FtsZ proteins can form; this complex enhances the dynamics of Z rings during chloroplast division. Binding to FTSZ2-1 is enabled by ARC6.

Its subcellular location is the plastid. It localises to the chloroplast outer membrane. The protein resides in the chloroplast stroma. Functionally, together with MIND1 and MCD1, regulates FtsZ ring positioning in chloroplasts in an ARC6-dependent manner. Z-ring accessory protein involved in the initiation of plastid division and division site placement (might functionally replace bacterial MinC). Acts as a disassembly factor that accelerates fragmentation and depolymerization of existing FtsZ2 filaments by enhancing FTSZ2 GTPase activity, thus leading to the conversion of FTSZ2 bound GTP into GDP, a process which triggers FtsZ2 filaments destabilization. Prevents misplaced Z-ring formation at chloroplast stroma nondivision sites. May control the rate of chloroplast expansion. Seems to influence stromule (stroma-filled tubular extensions of the plastid envelope membrane) length and frequency. This is Protein ACCUMULATION AND REPLICATION OF CHLOROPLASTS 3, chloroplastic from Arabidopsis thaliana (Mouse-ear cress).